The chain runs to 409 residues: Accessory Sec system protein translocase subunit SecY2 (409 aa).

The next 10 helical transmembrane spans lie at 16-36 (ILIT…PIPG), 61-81 (LSQV…MILL), 104-124 (VVML…FQYH), 132-152 (LLLA…IGNL), 161-181 (MTIL…PLIF), 190-210 (LAII…ITFE), 242-262 (GMAF…IILL), 286-306 (GVVI…FVNI), 341-361 (LFGT…LLFA), and 374-394 (TGIF…FQVI).

The protein belongs to the SecY/SEC61-alpha family. SecY2 subfamily. Component of the accessory SecA2/SecY2 protein translocase complex required to export cell wall proteins. May form heterotrimers with SecE and SecG subunits.

It localises to the cell membrane. Functionally, part of the accessory SecA2/SecY2 system specifically required for export of possible cell wall proteins. The central subunit of a protein translocation channel. This is Accessory Sec system protein translocase subunit SecY2 from Streptococcus agalactiae serotype III (strain NEM316).